The sequence spans 126 residues: Large ribosomal subunit protein bL20c (126 aa).

The protein belongs to the bacterial ribosomal protein bL20 family.

The protein resides in the plastid. The protein localises to the chloroplast. Binds directly to 23S ribosomal RNA and is necessary for the in vitro assembly process of the 50S ribosomal subunit. It is not involved in the protein synthesizing functions of that subunit. This chain is Large ribosomal subunit protein bL20c, found in Guizotia abyssinica (Niger).